Here is a 1030-residue protein sequence, read N- to C-terminus: Protein phosphatase 1 regulatory subunit 12A (1030 aa).

Residues 35 to 38 (KVKF) carry the KVKF motif motif. ANK repeat units lie at residues 39–68 (DDGAVFLAACSSGDTDEVLKLLHRGADINY), 72–101 (DGLTALHQACIDDNVDMVKFLVENGANINQ), 105–134 (EGWIPLHAAASCGYLDIAEFLIGQGAHVGA), 138–164 (EGDTPLDIAEEEAMEELLQNEVNRQGV), 198–227 (SGGTALHVAAAKGYTEVLKLLIQAGYDVNI), and 231–260 (DGWTPLHAAAHWGKEEACRILVDNLCDMEM). (3S)-3-hydroxyasparagine; by HIF1AN; partial occurs at positions 67 and 100. Asparagine 226 is modified ((3S)-3-hydroxyasparagine; by HIF1AN; partial). 2 disordered regions span residues 290–628 (LHSE…SVPT) and 643–928 (ASTT…EKDD). The span at 291–300 (HSEKRDKKSP) shows a compositional bias: basic and acidic residues. Serine 299 is modified (phosphoserine). Polar residues predominate over residues 302–316 (IESTANMDNNQSQKT). Residues 318 to 340 (KNKETLIIEPEKNASRIESLEQE) show a composition bias toward basic and acidic residues. Over residues 357 to 369 (SEEDEEDDSESEA) the composition is skewed to acidic residues. Over residues 385–402 (TSSTQAAPVAVTTPTVSS) the composition is skewed to low complexity. Serine 422 and serine 432 each carry phosphoserine. Basic and acidic residues predominate over residues 422–432 (SPKEEERKDES). Threonine 443 carries the phosphothreonine modification. A Phosphoserine; by NUAK1 modification is found at serine 445. Tyrosine 446 bears the Phosphotyrosine mark. Positions 469 to 480 (RSASSPRLSSSL) are enriched in low complexity. Serine 472 is subject to Phosphoserine; by NUAK1. Position 473 is a phosphoserine; by CDK1 (serine 473). Serine 477 is modified (phosphoserine). A compositionally biased stretch (basic and acidic residues) spans 481–491 (DNKEKEKDSKG). Phosphoserine is present on residues serine 507 and serine 509. The segment covering 540 to 551 (NSSVNEGSTYHK) has biased composition (polar residues). The span at 564–610 (SSSVPSTTSTPTVTSAAGLQKSLLSSTSTTTKITTGSSSAGTQSSTS) shows a compositional bias: low complexity. Phosphoserine is present on residues serine 601 and serine 618. Basic and acidic residues predominate over residues 614 to 625 (WAEDSTEKEKDS). Low complexity predominate over residues 643–660 (ASTTTLTTTTAGTVSSTT). Positions 673 to 682 (VRDEESESQR) are enriched in basic and acidic residues. The tract at residues 682–864 (RKARSRQARQ…VSFWTQDSDE (183 aa)) is interaction with ROCK2. Positions 683–693 (KARSRQARQSR) are enriched in basic residues. Serine 692 and serine 695 each carry phosphoserine; by PKA and PKG; in vitro. A Phosphothreonine; by ROCK1, ROCK2, CDC42BP, ZIPK/DAPK3 and RAF1 modification is found at threonine 696. Residues 718-767 (RTREQENEEKEKEEKEKQDKEKQEEKKESETSREDEYKQKYSRTYDETYQ) are compositionally biased toward basic and acidic residues. The span at 773-795 (STSSSTTPSSSLSTMSSSLYASS) shows a compositional bias: low complexity. Over residues 796–810 (QLNRPNSLVGITSAY) the composition is skewed to polar residues. Position 802 is a phosphoserine (serine 802). Positions 814 to 840 (ITKENEREGEKREEEKEGEDKSQPKSI) are enriched in basic and acidic residues. Basic residues predominate over residues 841–852 (RERRRPREKRRS). Position 852 is a phosphoserine; by ROCK2 (serine 852). Acidic residues predominate over residues 861 to 875 (DSDENEQEQQSDTEE). Residues serine 862 and serine 871 each carry the phosphoserine modification. Polar residues predominate over residues 884-897 (TDSISRYETSSTSA). A phosphoserine mark is found at serine 903 and serine 908. Over residues 903–913 (SLLGRSGSYSY) the composition is skewed to low complexity. A Phosphoserine; by NUAK1 modification is found at serine 910. A compositionally biased stretch (basic and acidic residues) spans 914-928 (LEERKPYSSRLEKDD). Serine 995 bears the Phosphoserine mark.

As to quaternary structure, PP1 comprises a catalytic subunit, PPP1CA, PPP1CB or PPP1CC, and one or several targeting or regulatory subunits. PPP1R12A mediates binding to myosin. Interacts with ARHA and CIT. Binds PPP1R12B, ROCK1 and IL16. Interacts directly with PRKG1. Non-covalent dimer of 2 dimers; PRKG1-PRKG1 and PPP1R12A-PPP1R12A. Interacts with SMTNL1. Interacts with PPP1CB; the interaction is direct. Interacts (when phosphorylated at Ser-445, Ser-472 and Ser-910) with 14-3-3. Interacts with ROCK1 and ROCK2. Interacts with isoform 1 and isoform 2 of ZIPK/DAPK3. Interacts with RAF1. Interacts with HIF1AN. Interacts with NCKAP1L. Post-translationally, phosphorylated by CIT (Rho-associated kinase). Phosphorylated cooperatively by ROCK1 and CDC42BP on Thr-696. Phosphorylated on upon DNA damage, probably by ATM or ATR. In vitro, phosphorylation of Ser-695 by PKA and PKG appears to prevent phosphorylation of the inhibitory site Thr-696, probably mediated by PRKG1. Phosphorylation at Ser-445, Ser-472 and Ser-910 by NUAK1 promotes interaction with 14-3-3, leading to inhibit interaction with myosin light chain MLC2, preventing dephosphorylation of MLC2. May be phosphorylated at Thr-696 by DMPK; may inhibit the myosin phosphatase activity. Phosphorylated at Ser-473 by CDK1 during mitosis, creating docking sites for the POLO box domains of PLK1. Subsequently, PLK1 binds and phosphorylates PPP1R12A. Expressed in striated muscles, specifically in type 2a fibers (at protein level).

It localises to the cytoplasm. The protein localises to the cytoskeleton. The protein resides in the stress fiber. In terms of biological role, key regulator of protein phosphatase 1C (PPP1C). Mediates binding to myosin. As part of the PPP1C complex, involved in dephosphorylation of PLK1. Capable of inhibiting HIF1AN-dependent suppression of HIF1A activity. This chain is Protein phosphatase 1 regulatory subunit 12A, found in Homo sapiens (Human).